A 355-amino-acid polypeptide reads, in one-letter code: Histidinol-phosphate aminotransferase 2 (355 aa).

Lys-210 bears the N6-(pyridoxal phosphate)lysine mark.

Belongs to the class-II pyridoxal-phosphate-dependent aminotransferase family. Histidinol-phosphate aminotransferase subfamily. Homodimer. The cofactor is pyridoxal 5'-phosphate.

It catalyses the reaction L-histidinol phosphate + 2-oxoglutarate = 3-(imidazol-4-yl)-2-oxopropyl phosphate + L-glutamate. It participates in amino-acid biosynthesis; L-histidine biosynthesis; L-histidine from 5-phospho-alpha-D-ribose 1-diphosphate: step 7/9. The polypeptide is Histidinol-phosphate aminotransferase 2 (Gluconobacter oxydans (strain 621H) (Gluconobacter suboxydans)).